We begin with the raw amino-acid sequence, 495 residues long: Cytochrome P450 2E1 (495 aa).

298-303 (FAGTET) is a binding site for substrate. Cysteine 437 lines the heme pocket.

This sequence belongs to the cytochrome P450 family. Interacts with chaperones HSP70 and HSP90; this interaction is required for initial targeting to mitochondria. Requires heme as cofactor.

Its subcellular location is the endoplasmic reticulum membrane. The protein localises to the microsome membrane. It localises to the mitochondrion inner membrane. The catalysed reaction is an organic molecule + reduced [NADPH--hemoprotein reductase] + O2 = an alcohol + oxidized [NADPH--hemoprotein reductase] + H2O + H(+). It carries out the reaction (5Z,8Z,11Z)-eicosatrienoate + reduced [NADPH--hemoprotein reductase] + O2 = 19-hydroxy-(5Z,8Z,11Z)-eicosatrienoate + oxidized [NADPH--hemoprotein reductase] + H2O + H(+). It catalyses the reaction (5Z,8Z,11Z,14Z,17Z)-eicosapentaenoate + reduced [NADPH--hemoprotein reductase] + O2 = 19-hydroxy-(5Z,8Z,11Z,14Z,17Z)-eicosapentaenoate + oxidized [NADPH--hemoprotein reductase] + H2O + H(+). The enzyme catalyses (4Z,7Z,10Z,13Z,16Z,19Z)-docosahexaenoate + reduced [NADPH--hemoprotein reductase] + O2 = 21-hydroxy-(4Z,7Z,10Z,13Z,16Z,19Z)-docosahexaenoate + oxidized [NADPH--hemoprotein reductase] + H2O + H(+). The catalysed reaction is dodecanoate + reduced [NADPH--hemoprotein reductase] + O2 = 11-hydroxydodecanoate + oxidized [NADPH--hemoprotein reductase] + H2O + H(+). It carries out the reaction tetradecanoate + reduced [NADPH--hemoprotein reductase] + O2 = 13-hydroxytetradecanoate + oxidized [NADPH--hemoprotein reductase] + H2O + H(+). It catalyses the reaction 4-nitrophenol + NADPH + O2 + H(+) = 4-nitrocatechol + NADP(+) + H2O. It participates in lipid metabolism; fatty acid metabolism. The omega-1 hydroxylase activity is stimulated by cytochrome b5. Its function is as follows. A cytochrome P450 monooxygenase involved in the metabolism of fatty acids. Mechanistically, uses molecular oxygen inserting one oxygen atom into a substrate, and reducing the second into a water molecule, with two electrons provided by NADPH via cytochrome P450 reductase (NADPH--hemoprotein reductase). Catalyzes the hydroxylation of carbon-hydrogen bonds. Hydroxylates fatty acids specifically at the omega-1 position displaying the highest catalytic activity for saturated fatty acids. May be involved in the oxidative metabolism of xenobiotics. The protein is Cytochrome P450 2E1 (CYP2E1) of Bos taurus (Bovine).